The following is a 245-amino-acid chain: MNVTLLIPARYGSSRFPGKPLAPINGKPMIQHVYERASLAKGLTDIYVATDDDRIKDAVEGFGGKVVMTSAEAASGTDRIEDAITQLGLAEDDLVVNLQGDQPLIDPISIEQIISLFERHPGEFGMATLGFQITEEEELNDPKHVKLVFDNEFNALYFSRARIPFGRDTDDYPVYKHLGVYAYTRKFVQTFAKLPLGRLEDLEKLEQLRALEHGHKIKVAISAFDSPEVDTPEDIRICEARLAVD.

This sequence belongs to the KdsB family.

It is found in the cytoplasm. The catalysed reaction is 8-amino-3,8-dideoxy-alpha-D-manno-octulosonate + CTP = CMP-8-amino-3,8-dideoxy-alpha-D-manno-oct-2-ulosonate + diphosphate. It participates in bacterial outer membrane biogenesis; lipopolysaccharide biosynthesis. In terms of biological role, activates KDO8N (a required 8-carbon sugar) for incorporation into bacterial lipopolysaccharide in the Shewanella genus. The protein is 8-amino-3,8-dideoxy-manno-octulosonate cytidylyltransferase of Shewanella piezotolerans (strain WP3 / JCM 13877).